We begin with the raw amino-acid sequence, 170 residues long: Cyclic pyranopterin monophosphate synthase 1 (170 aa).

Residues 79–81 (LCH) and 116–117 (ME) each bind substrate. Residue aspartate 131 is part of the active site.

The protein belongs to the MoaC family. As to quaternary structure, homohexamer; trimer of dimers.

It carries out the reaction (8S)-3',8-cyclo-7,8-dihydroguanosine 5'-triphosphate = cyclic pyranopterin phosphate + diphosphate. It functions in the pathway cofactor biosynthesis; molybdopterin biosynthesis. In terms of biological role, catalyzes the conversion of (8S)-3',8-cyclo-7,8-dihydroguanosine 5'-triphosphate to cyclic pyranopterin monophosphate (cPMP). The protein is Cyclic pyranopterin monophosphate synthase 1 (moaC1) of Mycobacterium bovis (strain ATCC BAA-935 / AF2122/97).